A 499-amino-acid polypeptide reads, in one-letter code: Low-affinity inorganic phosphate transporter PitB (499 aa).

10 helical membrane passes run 5-25 (FVGL…FVLF), 52-72 (LAVV…GLSV), 94-114 (LAMV…TWFF), 124-144 (LIGA…SSVM), 155-175 (IFSS…GLIF), 207-227 (PFWT…SHGA), 233-253 (GIGL…VVNM), 382-402 (APVW…MIGW), 430-450 (AAVS…THVL), and 473-493 (ILMA…GLYW).

The protein belongs to the inorganic phosphate transporter (PiT) (TC 2.A.20) family. Pit subfamily.

It localises to the cell inner membrane. The enzyme catalyses phosphate(in) + H(+)(in) = phosphate(out) + H(+)(out). Functionally, low-affinity inorganic phosphate transporter. The sequence is that of Low-affinity inorganic phosphate transporter PitB from Escherichia coli (strain K12).